Consider the following 796-residue polypeptide: Protein translocase subunit SecA 2 (796 aa).

Residues Gln84, 102–106, and Asp496 each bind ATP; that span reads GEGKT.

Belongs to the SecA family. In terms of assembly, monomer and homodimer. Part of the essential Sec protein translocation apparatus which comprises SecA, SecYEG and auxiliary proteins SecDF. Other proteins may also be involved.

The protein localises to the cell membrane. Its subcellular location is the cytoplasm. The enzyme catalyses ATP + H2O + cellular proteinSide 1 = ADP + phosphate + cellular proteinSide 2.. Part of the Sec protein translocase complex. Interacts with the SecYEG preprotein conducting channel. Has a central role in coupling the hydrolysis of ATP to the transfer of proteins into and across the cell membrane, serving as an ATP-driven molecular motor driving the stepwise translocation of polypeptide chains across the membrane. This is Protein translocase subunit SecA 2 from Staphylococcus haemolyticus (strain JCSC1435).